Here is a 338-residue protein sequence, read N- to C-terminus: Ferredoxin--NADP reductase (338 aa).

FAD contacts are provided by aspartate 35, glutamine 43, tyrosine 48, alanine 88, phenylalanine 122, aspartate 289, and threonine 330.

It belongs to the ferredoxin--NADP reductase type 2 family. As to quaternary structure, homodimer. The cofactor is FAD.

The enzyme catalyses 2 reduced [2Fe-2S]-[ferredoxin] + NADP(+) + H(+) = 2 oxidized [2Fe-2S]-[ferredoxin] + NADPH. The chain is Ferredoxin--NADP reductase from Ehrlichia chaffeensis (strain ATCC CRL-10679 / Arkansas).